A 60-amino-acid chain; its full sequence is Large ribosomal subunit protein bL32 (60 aa).

This sequence belongs to the bacterial ribosomal protein bL32 family.

The protein is Large ribosomal subunit protein bL32 of Clostridium perfringens (strain ATCC 13124 / DSM 756 / JCM 1290 / NCIMB 6125 / NCTC 8237 / Type A).